A 434-amino-acid polypeptide reads, in one-letter code: 5-methylthioadenosine/S-adenosylhomocysteine deaminase (434 aa).

Residues H66 and H68 each coordinate Zn(2+). E95, R148, and H188 together coordinate substrate. Position 215 (H215) interacts with Zn(2+). E218 and D304 together coordinate substrate. Position 304 (D304) interacts with Zn(2+).

The protein belongs to the metallo-dependent hydrolases superfamily. MTA/SAH deaminase family. The cofactor is Zn(2+).

It carries out the reaction S-adenosyl-L-homocysteine + H2O + H(+) = S-inosyl-L-homocysteine + NH4(+). It catalyses the reaction S-methyl-5'-thioadenosine + H2O + H(+) = S-methyl-5'-thioinosine + NH4(+). Its function is as follows. Catalyzes the deamination of 5-methylthioadenosine and S-adenosyl-L-homocysteine into 5-methylthioinosine and S-inosyl-L-homocysteine, respectively. Is also able to deaminate adenosine. The protein is 5-methylthioadenosine/S-adenosylhomocysteine deaminase of Shouchella clausii (strain KSM-K16) (Alkalihalobacillus clausii).